We begin with the raw amino-acid sequence, 263 residues long: uncharacterized protein (263 aa).

31–38 (GPTGSGKT) lines the ATP pocket.

Belongs to the CbbQ/NirQ/NorQ/GpvN family.

This is an uncharacterized protein from Staphylococcus aureus (strain USA300).